A 598-amino-acid polypeptide reads, in one-letter code: Transcription factor himD (598 aa).

A DNA-binding region (zn(2)-C6 fungal-type) is located at residues 18–47; sequence CQNCARAKIRCIRSVPTGSCDRCERLRKTC. Positions 87-110 are disordered; that stretch reads TVSEASIDDKSPTTTPTTPRPPPD.

Its subcellular location is the nucleus. Functionally, transcription factor that, with himB, probably co-regulates the him gene cluster that mediates the biosynthesis of himeic acid A, a ubiquitin-activating enzyme (E1) inhibitor. The polypeptide is Transcription factor himD (Aspergillus japonicus).